A 406-amino-acid chain; its full sequence is Paracaspase (406 aa).

Residues 193 to 374 are caspase-like; it reads IGNSKYSQHR…TERKNNNIST (182 aa). Residues His-266 and Cys-311 contribute to the active site.

Belongs to the peptidase C14B family.

In terms of biological role, not required for DIF-induced autophagic cell death and necrotic cell death. The polypeptide is Paracaspase (pcp) (Dictyostelium discoideum (Social amoeba)).